A 371-amino-acid chain; its full sequence is tRNA-specific 2-thiouridylase MnmA (371 aa).

ATP contacts are provided by residues 14–21 (GMSGGVDS) and Met40. Residues 100-102 (NPD) are interaction with target base in tRNA. The active-site Nucleophile is the Cys105. An intrachain disulfide couples Cys105 to Cys205. Gly129 serves as a coordination point for ATP. Positions 155–157 (KDQ) are interaction with tRNA. The Cysteine persulfide intermediate role is filled by Cys205. Residues 321–322 (RY) are interaction with tRNA.

Belongs to the MnmA/TRMU family.

Its subcellular location is the cytoplasm. The catalysed reaction is S-sulfanyl-L-cysteinyl-[protein] + uridine(34) in tRNA + AH2 + ATP = 2-thiouridine(34) in tRNA + L-cysteinyl-[protein] + A + AMP + diphosphate + H(+). In terms of biological role, catalyzes the 2-thiolation of uridine at the wobble position (U34) of tRNA, leading to the formation of s(2)U34. In Bordetella pertussis (strain Tohama I / ATCC BAA-589 / NCTC 13251), this protein is tRNA-specific 2-thiouridylase MnmA.